The sequence spans 884 residues: Protein translocase subunit SecA (884 aa).

Residues Gln82, 100 to 104, and Asp491 contribute to the ATP site; that span reads GEGKT.

Belongs to the SecA family.

It localises to the plastid. Its subcellular location is the chloroplast stroma. The protein localises to the chloroplast thylakoid membrane. The enzyme catalyses ATP + H2O + cellular proteinSide 1 = ADP + phosphate + cellular proteinSide 2.. Has a central role in coupling the hydrolysis of ATP to the transfer of proteins across the thylakoid membrane. The chain is Protein translocase subunit SecA from Olisthodiscus luteus (Marine phytoflagellate).